The sequence spans 1609 residues: Factor-induced gene 2 protein (1609 aa).

The first 22 residues, 1–22, serve as a signal peptide directing secretion; sequence MNSFASLGLIYSVVNLLTRVEA. An N-linked (GlcNAc...) asparagine glycan is attached at Asn29. Disordered regions lie at residues 129–165, 196–243, and 266–312; these read SSTLSSTAQPHRTSHSSSSFELPVTAPSSSSLPSSTS, SSEI…EPLS, and TIPT…NYDV. Over residues 137–148 the composition is skewed to polar residues; it reads QPHRTSHSSSSF. A compositionally biased stretch (low complexity) spans 150 to 165; sequence LPVTAPSSSSLPSSTS. Residues 196-212 are compositionally biased toward polar residues; it reads SSEISGSTSPKSLESFD. Composition is skewed to low complexity over residues 213–243 and 274–285; these read TTGTITSSYSPSPSSKNSNQTSLLSPLEPLS and TSSLPPTLRSSS. Asn231 carries an N-linked (GlcNAc...) asparagine glycan. Positions 286–312 are enriched in polar residues; that stretch reads MAPTSGSDSISHNFTSPPSKTSGNYDV. N-linked (GlcNAc...) asparagine glycosylation is found at Asn298, Asn347, Asn386, Asn426, Asn495, Asn535, Asn661, Asn674, and Asn713. Residues 846–876 are disordered; sequence ATSEATSTSTQVSATSATATASESSTTSQVS. Residues Asn889, Asn907, and Asn1079 are each glycosylated (N-linked (GlcNAc...) asparagine). The span at 1231–1243 shows a compositional bias: polar residues; it reads CTQDVPTQSSSPA. The tract at residues 1231–1259 is disordered; that stretch reads CTQDVPTQSSSPASTLAYSPSVSTSSSSS. Over residues 1244–1259 the composition is skewed to low complexity; sequence STLAYSPSVSTSSSSS. Asn1400 carries N-linked (GlcNAc...) asparagine glycosylation. A lipid anchor (GPI-anchor amidated glycine) is attached at Gly1588. A propeptide spans 1589-1609 (removed in mature form); it reads SASKFLCSKFFMIMVMVINFI.

N-glycosylated.

It localises to the secreted. The protein localises to the cell wall. It is found in the membrane. Required for efficient mating. Plays a role in maintenance of cell wall integrity during mating. Important for mating cell projection shape and conjugation bridge diameter. Plays a role in cell fusion and nuclear migration. The chain is Factor-induced gene 2 protein (FIG2) from Saccharomyces cerevisiae (strain ATCC 204508 / S288c) (Baker's yeast).